The primary structure comprises 346 residues: Leucine zipper protein 2 (346 aa).

The first 19 residues, 1–19 (MKFSPAHYLLPLLPALVLS), serve as a signal peptide directing secretion. Residues 16–211 (LVLSTRQDYE…QMKAMKETVQ (196 aa)) are a coiled coil. The N-linked (GlcNAc...) asparagine glycan is linked to asparagine 133. The segment at 164–192 (LRYGKKDLLFKAQQLTDLEQKLAVAKNEL) is leucine-zipper. Disordered regions lie at residues 221–240 (QPPP…LLPP) and 248–346 (PDAA…EKIL). Low complexity predominate over residues 250–261 (AAAKSKPQQSAS). Residues 262–283 (GNNESSQVESTKEGNPSTTACD) are compositionally biased toward polar residues. An N-linked (GlcNAc...) asparagine glycan is attached at asparagine 264. A compositionally biased stretch (basic and acidic residues) spans 286–298 (DEGRPCSMKHKES). Asparagine 302 carries N-linked (GlcNAc...) asparagine glycosylation.

The protein localises to the secreted. This chain is Leucine zipper protein 2 (LUZP2), found in Homo sapiens (Human).